Consider the following 1775-residue polypeptide: Protein TIC 214 (1775 aa).

The next 6 membrane-spanning stretches (helical) occupy residues 19-39, 68-88, 91-111, 133-153, 176-196, and 227-247; these read IINS…FSIG, FIAG…HLAL, PHTI…WNNH, VFLN…SSML, VGWL…LVWI, and IFSI…PSPI. A disordered region spans residues 1491–1512; sequence KESAGQGERESDNEKKKNLESA.

This sequence belongs to the TIC214 family. Part of the Tic complex.

Its subcellular location is the plastid. It is found in the chloroplast inner membrane. In terms of biological role, involved in protein precursor import into chloroplasts. May be part of an intermediate translocation complex acting as a protein-conducting channel at the inner envelope. The polypeptide is Protein TIC 214 (Lobularia maritima (Sweet alyssum)).